A 1060-amino-acid polypeptide reads, in one-letter code: DNA-directed RNA polymerase subunit beta (1060 aa).

It belongs to the RNA polymerase beta chain family. As to quaternary structure, in plastids the minimal PEP RNA polymerase catalytic core is composed of four subunits: alpha, beta, beta', and beta''. When a (nuclear-encoded) sigma factor is associated with the core the holoenzyme is formed, which can initiate transcription.

The protein resides in the plastid. It localises to the chloroplast. It catalyses the reaction RNA(n) + a ribonucleoside 5'-triphosphate = RNA(n+1) + diphosphate. Its function is as follows. DNA-dependent RNA polymerase catalyzes the transcription of DNA into RNA using the four ribonucleoside triphosphates as substrates. The polypeptide is DNA-directed RNA polymerase subunit beta (Calycanthus floridus var. glaucus (Eastern sweetshrub)).